Here is a 343-residue protein sequence, read N- to C-terminus: NADH-quinone oxidoreductase subunit H (343 aa).

8 helical membrane-spanning segments follow: residues valine 19–tyrosine 39, alanine 89–isoleucine 109, leucine 124–alanine 144, alanine 158–alanine 178, tryptophan 198–threonine 218, isoleucine 257–phenylalanine 277, proline 279–phenylalanine 299, and leucine 314–methionine 334.

The protein belongs to the complex I subunit 1 family. As to quaternary structure, NDH-1 is composed of 14 different subunits. Subunits NuoA, H, J, K, L, M, N constitute the membrane sector of the complex.

The protein resides in the cell inner membrane. It catalyses the reaction a quinone + NADH + 5 H(+)(in) = a quinol + NAD(+) + 4 H(+)(out). NDH-1 shuttles electrons from NADH, via FMN and iron-sulfur (Fe-S) centers, to quinones in the respiratory chain. The immediate electron acceptor for the enzyme in this species is believed to be ubiquinone. Couples the redox reaction to proton translocation (for every two electrons transferred, four hydrogen ions are translocated across the cytoplasmic membrane), and thus conserves the redox energy in a proton gradient. This subunit may bind ubiquinone. The sequence is that of NADH-quinone oxidoreductase subunit H from Thiobacillus denitrificans (strain ATCC 25259 / T1).